A 606-amino-acid chain; its full sequence is Phosphogluconate dehydratase (606 aa).

Residues Cys-156 and Cys-223 each coordinate [4Fe-4S] cluster.

This sequence belongs to the IlvD/Edd family. The cofactor is [4Fe-4S] cluster.

It carries out the reaction 6-phospho-D-gluconate = 2-dehydro-3-deoxy-6-phospho-D-gluconate + H2O. It participates in carbohydrate metabolism; Entner-Doudoroff pathway. In terms of biological role, catalyzes the dehydration of 6-phospho-D-gluconate to 2-dehydro-3-deoxy-6-phospho-D-gluconate. The protein is Phosphogluconate dehydratase of Rhizobium meliloti (strain 1021) (Ensifer meliloti).